Here is a 63-residue protein sequence, read N- to C-terminus: SPbeta prophage-derived uncharacterized protein YotC (63 aa).

The protein is SPbeta prophage-derived uncharacterized protein YotC (yotC) of Bacillus subtilis (strain 168).